We begin with the raw amino-acid sequence, 185 residues long: Large ribosomal subunit protein uL22 (185 aa).

It belongs to the universal ribosomal protein uL22 family. Part of the 50S ribosomal subunit.

Its function is as follows. This protein binds specifically to 23S rRNA. It makes multiple contacts with different domains of the 23S rRNA in the assembled 50S subunit and ribosome. The globular domain of the protein is located near the polypeptide exit tunnel on the outside of the subunit, while an extended beta-hairpin is found that lines the wall of the exit tunnel in the center of the 70S ribosome. The chain is Large ribosomal subunit protein uL22 from Pyrobaculum aerophilum (strain ATCC 51768 / DSM 7523 / JCM 9630 / CIP 104966 / NBRC 100827 / IM2).